A 210-amino-acid chain; its full sequence is Ribulose-phosphate 3-epimerase (210 aa).

A substrate-binding site is contributed by Ser-9. 3 residues coordinate a divalent metal cation: His-34, Asp-36, and His-68. Asp-36 acts as the Proton acceptor in catalysis. Residues His-68, 144 to 147 (GFGG), 177 to 179 (DGG), and 199 to 200 (GS) each bind substrate. Asp-177 is a binding site for a divalent metal cation. Asp-177 serves as the catalytic Proton donor.

The protein belongs to the ribulose-phosphate 3-epimerase family. The cofactor is a divalent metal cation.

It catalyses the reaction D-ribulose 5-phosphate = D-xylulose 5-phosphate. The protein operates within carbohydrate degradation. Its function is as follows. Catalyzes the reversible epimerization of D-ribulose 5-phosphate to D-xylulose 5-phosphate. This chain is Ribulose-phosphate 3-epimerase, found in Serratia marcescens.